The sequence spans 227 residues: Ribonuclease 3 (227 aa).

The RNase III domain occupies 4–126 (LDRLERKIGY…IIGAMSLDQG (123 aa)). Glu39 contacts Mg(2+). Asp43 is an active-site residue. Positions 112 and 115 each coordinate Mg(2+). The active site involves Glu115. The 74-residue stretch at 153 to 226 (DAKTRLQEYL…AEQILKELDI (74 aa)) folds into the DRBM domain.

This sequence belongs to the ribonuclease III family. Homodimer. The cofactor is Mg(2+).

It localises to the cytoplasm. The catalysed reaction is Endonucleolytic cleavage to 5'-phosphomonoester.. Digests double-stranded RNA. Involved in the processing of primary rRNA transcript to yield the immediate precursors to the large and small rRNAs (23S and 16S). Processes some mRNAs, and tRNAs when they are encoded in the rRNA operon. Processes pre-crRNA and tracrRNA of type II CRISPR loci if present in the organism. This chain is Ribonuclease 3, found in Haemophilus influenzae (strain 86-028NP).